Consider the following 186-residue polypeptide: Mitochondrial import inner membrane translocase subunit Tim22 (186 aa).

Intrachain disulfides connect C61–C133 and C152–C171. The next 3 helical transmembrane spans lie at 66–86, 117–135, and 162–182; these read ALAC…TAGI, YAKN…ECLV, and AGLK…AVID.

Belongs to the Tim17/Tim22/Tim23 family. Core component of the TIM22 complex.

Its subcellular location is the mitochondrion inner membrane. Essential core component of the TIM22 complex, a complex that mediates the import and insertion of multi-pass transmembrane proteins into the mitochondrial inner membrane. In the TIM22 complex, it constitutes the voltage-activated and signal-gated channel. Forms a twin-pore translocase that uses the membrane potential as external driving force in 2 voltage-dependent steps. The polypeptide is Mitochondrial import inner membrane translocase subunit Tim22 (timm22) (Xenopus tropicalis (Western clawed frog)).